Reading from the N-terminus, the 310-residue chain is Melanocyte-stimulating hormone receptor (310 aa).

Residues 1–37 (MPMQGAQRKLLGSLNSTPTATSNLGLAANRTGAPCLE) lie on the Extracellular side of the membrane. Asparagine 29 carries N-linked (GlcNAc...) asparagine glycosylation. Residues 38 to 63 (LPIPDGLFLSLGLVSLVENVLVVAAI) form a helical membrane-spanning segment. The Cytoplasmic segment spans residues 64–72 (AKNRNLHSS). Residues 73-93 (MYCFICCLALSDLLVSGSNML) form a helical membrane-spanning segment. Residues 94 to 110 (EAGVLATRASVVQQLHN) lie on the Extracellular side of the membrane. Residues 111–132 (TIDVLTCSSMLCSLCFLGAIAV) form a helical membrane-spanning segment. Topologically, residues 133–155 (DRYISIFYALRYHSIMTLPRAQR) are cytoplasmic. The helical transmembrane segment at 156–175 (AVAAIWVASVLSSTLFITYY) threads the bilayer. At 176-183 (DHAAVLLC) the chain is on the extracellular side. The helical transmembrane segment at 184-203 (LVVFFLAMLVLMAVLYVHML) threads the bilayer. Over 204-232 (AWACQHAQGIIRLHKRQPPAHKGFGLRGA) the chain is Cytoplasmic. The chain crosses the membrane as a helical span at residues 233 to 258 (ATLTILLGIFFLCWGPFFLRLTLVVF). Residues 259–271 (CPQHLTCNCIFKN) are Extracellular-facing. The helical transmembrane segment at 272-292 (FKVFLTLIICNTIIDPLIYAF) threads the bilayer. At 293-310 (RSQELRRTLKEVLGRGRW) the chain is on the cytoplasmic side.

It belongs to the G-protein coupled receptor 1 family. Interacts with MGRN1, but does not undergo MGRN1-mediated ubiquitination; this interaction competes with GNAS-binding and thus inhibits agonist-induced cAMP production. Interacts with OPN3; the interaction results in a decrease in MC1R-mediated cAMP signaling and ultimately a decrease in melanin production in melanocytes.

It localises to the cell membrane. In terms of biological role, receptor for MSH (alpha, beta and gamma) and ACTH. The activity of this receptor is mediated by G proteins which activate adenylate cyclase. Mediates melanogenesis, the production of eumelanin (black/brown) and phaeomelanin (red/yellow), via regulation of cAMP signaling in melanocytes. This Leontopithecus chrysomelas (Golden-headed lion tamarin) protein is Melanocyte-stimulating hormone receptor (MC1R).